The primary structure comprises 122 residues: Large ribosomal subunit protein uL14 (122 aa).

The protein belongs to the universal ribosomal protein uL14 family. As to quaternary structure, part of the 50S ribosomal subunit. Forms a cluster with proteins L3 and L19. In the 70S ribosome, L14 and L19 interact and together make contacts with the 16S rRNA in bridges B5 and B8.

Functionally, binds to 23S rRNA. Forms part of two intersubunit bridges in the 70S ribosome. The protein is Large ribosomal subunit protein uL14 of Rickettsia canadensis (strain McKiel).